The primary structure comprises 117 residues: MNIIEQLDKEQMAAREAKIPEFGPGDTVTVQVWVKEGGRERLQAFEGVVIAKRNRGINSAFTVRKVSHGEGVERVFQTYSPIIESVKVKRRGDVRRAKLYYLRERSGKSARIKEKVK.

Belongs to the bacterial ribosomal protein bL19 family.

Its function is as follows. This protein is located at the 30S-50S ribosomal subunit interface and may play a role in the structure and function of the aminoacyl-tRNA binding site. This chain is Large ribosomal subunit protein bL19, found in Alkalilimnicola ehrlichii (strain ATCC BAA-1101 / DSM 17681 / MLHE-1).